Reading from the N-terminus, the 852-residue chain is Cytochrome P450 monooxygenase mpaDE (852 aa).

The Lumenal portion of the chain corresponds to 1 to 6 (MDYLII). The chain crosses the membrane as a helical span at residues 7–29 (IRITAVAVVLYLTRYVCCLYLHL). Topologically, residues 30–852 (QDVPGPLFAK…DLEDAMEGTK (823 aa)) are cytoplasmic. C448 is a heme binding site.

Belongs to the cytochrome P450 family. Heme is required as a cofactor.

Its subcellular location is the endoplasmic reticulum membrane. It catalyses the reaction 5-methylorsellinate + reduced [NADPH--hemoprotein reductase] + O2 = 4,6-dihydroxy-2-(hydroxymethyl)-3-methylbenzoate + oxidized [NADPH--hemoprotein reductase] + H2O + H(+). The catalysed reaction is 4,6-dihydroxy-2-(hydroxymethyl)-3-methylbenzoate + H(+) = 5,7-dihydroxy-4-methylphthalide + H2O. Its pathway is secondary metabolite biosynthesis; terpenoid biosynthesis. Cytochrome P450 monooxygenase; part of the gene cluster that mediates the biosynthesis of mycophenolic acid (MPA), the first isolated antibiotic natural product in the world obtained from a culture of Penicillium brevicompactum in 1893. MpaDE is an endoplasmic reticulum-bound enzyme that catalyzes the conversion of 5-methylorsellinic acid (5MOA) into the phthalide compound 5,7-dihydroxy-4,6-dimethylphthalide (DHMP). MpaDE first catalyzes hydroxylation of 5-MOA to 4,6-dihydroxy-2-(hydroxymethyl)-3-methylbenzoic acid (DHMB), and then acts as a lactone synthase that catalyzes the ring closure to convert DHMB into DHMP. The first step of the pathway is the synthesis of 5-methylorsellinic acid (5MOA) by the cytosolic polyketide synthase mpaC. 5MOA is then converted to the phthalide compound 5,7-dihydroxy-4,6-dimethylphthalide (DHMP) by the endoplasmic reticulum-bound cytochrome P450 monooxygenase mpaDE. MpaDE first catalyzes hydroxylation of 5-MOA to 4,6-dihydroxy-2-(hydroxymethyl)-3-methylbenzoic acid (DHMB). MpaDE then acts as a lactone synthase that catalyzes the ring closure to convert DHMB into DHMP. The next step is the prenylation of DHMP by the Golgi apparatus-associated prenyltransferase mpaA to yield farnesyl-DHMP (FDHMP). The ER-bound oxygenase mpaB then mediates the oxidative cleavage the C19-C20 double bond in FDHMP to yield FDHMP-3C via a mycophenolic aldehyde intermediate. The O-methyltransferase mpaG catalyzes the methylation of FDHMP-3C to yield MFDHMP-3C. After the cytosolic methylation of FDHMP-3C, MFDHMP-3C enters into peroxisomes probably via free diffusion due to its low molecular weight. Upon a peroxisomal CoA ligation reaction, catalyzed by a beta-oxidation component enzyme acyl-CoA ligase ACL891, MFDHMP-3C-CoA would then be restricted to peroxisomes for the following beta-oxidation pathway steps. The peroxisomal beta-oxidation machinery than converts MFDHMP-3C-CoA into MPA_CoA, via a beta-oxidation chain-shortening process. Finally mpaH acts as a peroxisomal acyl-CoA hydrolase with high substrate specificity toward MPA-CoA to release the final product MPA. The sequence is that of Cytochrome P450 monooxygenase mpaDE from Penicillium roqueforti (strain FM164).